A 470-amino-acid polypeptide reads, in one-letter code: MADEFPFEISPMFEGERVRKEGMFVELGGPKSLGLELVRAADMDAIEDDKVTIIGPDLKDMEEGKTYPWAMIFNIGGELVEPDLESVVERRVHDFINYCQGIMHLNQRYDVWMRVSKDTAAKMDSFEPFGKAVMMLFKTELPFIEKMQVTFYTDKDEVEKQMETAKEIFKARDARTKDLHDEDVEVFYGCTLCQSFAPTNVCVVSPDRISLCGAINWFDGRAAAKVDPEGPQFEIAKGDLIDAVTGEYTGVNEIAKKLSSGEFDKIKLHSFFDCPHTSCGCFEVVGFYIPEVDGIGWVDREYQGMAPNGIGFSTMAGQTGGGKQIVGFLGIGVNYFYSPKFIQADGGWNRVVWLPSKLKEKIDEAIPADLKDKIATENDASDIESLKAFLQEKNHPVVATWAAAEEEEEEEEEEEEVAVAAAPMMMPAAGFQMPAMPMMSGGSSGGIKLTFKNAKITIDRMIISEKKEKK.

Cys-190, Cys-193, Cys-279, and Cys-281 together coordinate [Ni-Fe-S] cluster.

The protein belongs to the CdhC family. Monomer. The ACDS complex is made up of alpha, epsilon, beta, gamma and delta chains with a probable stoichiometry of (alpha(2)epsilon(2))(4)-beta(8)-(gamma(1)delta(1))(8) (Potential). The cofactor is [Ni-Fe-S] cluster.

It catalyses the reaction Co(I)-[corrinoid Fe-S protein] + acetyl-CoA + H(+) = methyl-Co(III)-[corrinoid Fe-S protein] + CO + CoA. The protein operates within one-carbon metabolism; methanogenesis from acetate. In terms of biological role, part of a complex that catalyzes the reversible cleavage of acetyl-CoA, allowing growth on acetate as sole source of carbon and energy. The alpha-epsilon complex generates CO from CO(2), while the beta subunit (this protein) combines the CO with CoA and a methyl group to form acetyl-CoA. The methyl group, which is incorporated into acetyl-CoA, is transferred to the beta subunit by a corrinoid iron-sulfur protein (the gamma-delta complex). In Methanosarcina mazei (strain ATCC BAA-159 / DSM 3647 / Goe1 / Go1 / JCM 11833 / OCM 88) (Methanosarcina frisia), this protein is Acetyl-CoA decarbonylase/synthase complex subunit beta 2 (cdhC2).